We begin with the raw amino-acid sequence, 194 residues long: Mitochondrial import inner membrane translocase subunit Tim22 (194 aa).

2 cysteine pairs are disulfide-bonded: cysteine 69–cysteine 141 and cysteine 160–cysteine 179. A run of 3 helical transmembrane segments spans residues 74 to 94 (ALAC…TAGI), 123 to 143 (MSYA…ECLI), and 170 to 190 (AGLK…AAID).

The protein belongs to the Tim17/Tim22/Tim23 family. As to quaternary structure, component of the TIM22 complex, whose core is composed of TIMM22, associated with peripheral protein FXC1/TIMM10B and the 70 kDa heterohexamer. In most cases, the 70 kDa complex is composed of TIMM9 and TIMM10 (TIMM10A or TIMM10B). A small fraction of the 70 kDa complex is composed of TIMM8 (TIMM8A/DDP1 or TIMM8B/DDP2) and TIMM13. The TIM22 complex also contains AGK and TIMM29. Interacts directly with TIMM9, TIMM10A and FXC1/TIMM10B. Interacts (when oxidized) with TIMM29; interaction is direct. In terms of processing, disulfide bonds promote efficient assembly of the TIM22 complex.

Its subcellular location is the mitochondrion inner membrane. In terms of biological role, essential core component of the TIM22 complex, a complex that mediates the import and insertion of multi-pass transmembrane proteins into the mitochondrial inner membrane. In the TIM22 complex, it constitutes the voltage-activated and signal-gated channel. Forms a twin-pore translocase that uses the membrane potential as external driving force in 2 voltage-dependent steps. The chain is Mitochondrial import inner membrane translocase subunit Tim22 (TIMM22) from Homo sapiens (Human).